Reading from the N-terminus, the 94-residue chain is Co-chaperonin GroES (94 aa).

Belongs to the GroES chaperonin family. In terms of assembly, heptamer of 7 subunits arranged in a ring. Interacts with the chaperonin GroEL.

The protein resides in the cytoplasm. Functionally, together with the chaperonin GroEL, plays an essential role in assisting protein folding. The GroEL-GroES system forms a nano-cage that allows encapsulation of the non-native substrate proteins and provides a physical environment optimized to promote and accelerate protein folding. GroES binds to the apical surface of the GroEL ring, thereby capping the opening of the GroEL channel. The sequence is that of Co-chaperonin GroES from Listeria innocua serovar 6a (strain ATCC BAA-680 / CLIP 11262).